A 365-amino-acid chain; its full sequence is tRNA-specific 2-thiouridylase MnmA (365 aa).

ATP contacts are provided by residues 14-21 and Leu-40; that span reads AMSGGVDS. The active-site Nucleophile is Cys-108. A disulfide bridge links Cys-108 with Cys-204. Gly-132 contacts ATP. The tract at residues 154–156 is interaction with tRNA; it reads KDQ. The Cysteine persulfide intermediate role is filled by Cys-204.

It belongs to the MnmA/TRMU family.

The protein resides in the cytoplasm. It catalyses the reaction S-sulfanyl-L-cysteinyl-[protein] + uridine(34) in tRNA + AH2 + ATP = 2-thiouridine(34) in tRNA + L-cysteinyl-[protein] + A + AMP + diphosphate + H(+). Its function is as follows. Catalyzes the 2-thiolation of uridine at the wobble position (U34) of tRNA, leading to the formation of s(2)U34. In Rickettsia rickettsii (strain Iowa), this protein is tRNA-specific 2-thiouridylase MnmA.